We begin with the raw amino-acid sequence, 1238 residues long: Lysine-specific demethylase JMJ703 (1238 aa).

The segment at 56-79 (EECQPSAAVSRSDTPCSTSGTQTC) is disordered. Residues 62 to 79 (AAVSRSDTPCSTSGTQTC) are compositionally biased toward polar residues. The region spanning 154 to 195 (APVFYPTEEEFEDTLKYIESIRPMAEPYGICRIVPPSSWKPP) is the JmjN domain. Residues 215-266 (KVDKLQNRKSSKKGRRGGMMKRRKLAESEENSATAHTQTGMQQSPERFGFEP) form a disordered region. Residues 221–238 (NRKSSKKGRRGGMMKRRK) are compositionally biased toward basic residues. Over residues 245 to 259 (NSATAHTQTGMQQSP) the composition is skewed to polar residues. The 167-residue stretch at 348–514 (KYAQSGWNLN…IGHNAVELYR (167 aa)) folds into the JmjC domain. His-394, Glu-396, and His-482 together coordinate Fe cation. Disordered regions lie at residues 699 to 725 (GPRRSYMSQASAVSLVSSSTSNEQKDE), 777 to 798 (YNGGLGGHKGSAPGLPVSSSPS), 834 to 863 (TGDSRSLLGEHHNRSPAMIHDGTNMKSSLE), and 910 to 978 (ASSQ…LQRT). Positions 706 to 719 (SQASAVSLVSSSTS) are enriched in low complexity. The segment covering 910 to 923 (ASSQQFVRTGPWTQ) has biased composition (polar residues). Over residues 924–936 (SASHEASSPSTSA) the composition is skewed to low complexity. The segment covering 964–978 (SFSNQQPNDGRLQRT) has biased composition (polar residues). Positions 1019–1077 (VVHRFKCSVEPLEIGVVLSGRLWSSSQAIFPKGFRSRVKYFSIVDPIQMAYYISEILDA) constitute an FYR N-terminal domain. The FYR C-terminal domain maps to 1079 to 1169 (MQGPLFMVKL…HICTEYWRSR (91 aa)).

Fe(2+) is required as a cofactor. Expressed in roots, leaf sheaths, stems and panicles.

The protein localises to the nucleus. The enzyme catalyses N(6),N(6),N(6)-trimethyl-L-lysyl(4)-[histone H3] + 3 2-oxoglutarate + 3 O2 = L-lysyl(4)-[histone H3] + 3 formaldehyde + 3 succinate + 3 CO2. Its function is as follows. Histone demethylase that demethylates 'Lys-4' (H3K4me) of histone H3 with a specific activity for H3K4me3, H3K4me2 and H3K4me1. No activity on H3K9me3/2/1, H3K27me3/2/1 and H3K36me3/2/1. Involved in the control of stem elongation by regulating methylation states of H3K4me3 on cytokinin oxidase (CKX) gene family, which may cause increased expression of CKX genes and reduced cytokinin levels. Prevents ectopic retrotransposition by regulating the levels of H3K4me3 in two non-LTR retrotransposons KARMA and LINE-1 (L1) and reinforcing their repressed states. This is Lysine-specific demethylase JMJ703 (JMJ703) from Oryza sativa subsp. japonica (Rice).